Here is a 98-residue protein sequence, read N- to C-terminus: Large ribosomal subunit protein bL27 (98 aa).

A propeptide spanning residues 1–13 (MKKIWFHLDLQFF) is cleaved from the precursor.

It belongs to the bacterial ribosomal protein bL27 family. In terms of processing, the N-terminus is cleaved by ribosomal processing cysteine protease Prp.

The polypeptide is Large ribosomal subunit protein bL27 (Mycoplasmoides gallisepticum (strain R(low / passage 15 / clone 2)) (Mycoplasma gallisepticum)).